The following is a 95-amino-acid chain: Protein TusB (95 aa).

This sequence belongs to the DsrH/TusB family. Heterohexamer, formed by a dimer of trimers. The hexameric TusBCD complex contains 2 copies each of TusB, TusC and TusD. The TusBCD complex interacts with TusE.

Its subcellular location is the cytoplasm. Functionally, part of a sulfur-relay system required for 2-thiolation of 5-methylaminomethyl-2-thiouridine (mnm(5)s(2)U) at tRNA wobble positions. This is Protein TusB from Klebsiella pneumoniae subsp. pneumoniae (strain ATCC 700721 / MGH 78578).